We begin with the raw amino-acid sequence, 120 residues long: DLQTTGADHSATVNPDQQLIMTKHSATVTPENKCVFPFNYRGYRYYDCTRTDSFYRWCSLTGTYSGSWKYCAATDYAKCAFPFVYRGQTYDRCTTDGSLFRISWCSVTPNYDHHGAWKYC.

2 consecutive repeat copies span residues 1 to 13 (DLQT…SATV) and 16 to 28 (DQQL…SATV). Residues 1–28 (DLQTTGADHSATVNPDQQLIMTKHSATV) form a 2 X approximate repeats region. O-linked (GalNAc...) threonine glycosylation is found at threonine 5, threonine 12, threonine 22, and threonine 27. Fibronectin type-II domains follow at residues 29–73 (TPEN…YCAA) and 74–120 (TDYA…WKYC). 4 cysteine pairs are disulfide-bonded: cysteine 34/cysteine 58, cysteine 48/cysteine 71, cysteine 79/cysteine 105, and cysteine 93/cysteine 120.

This sequence belongs to the seminal plasma protein family. One glycoform exists as a monomer while the other forms a heterotetramer with HSP-2 and binds heparin. O-glycosylated on Thr. There are two forms of HSP-1 which probably differ in the amount of sialylation of polysaccharide. Major component of seminal plasma.

Its subcellular location is the secreted. Its function is as follows. Could enhance the fertilizing capacity of spermatozoa upon interaction with heparin-like glycosaminoglycans present in the female genital tract. The protein is Seminal plasma protein HSP-1 of Equus caballus (Horse).